We begin with the raw amino-acid sequence, 290 residues long: UDP-N-acetylenolpyruvoylglucosamine reductase (290 aa).

Residues 20-187 (GVGGESEMWF…SRVRLKLRPS (168 aa)) enclose the FAD-binding PCMH-type domain. Arg-167 is a catalytic residue.

It belongs to the MurB family. The cofactor is FAD.

Its subcellular location is the cytoplasm. The enzyme catalyses UDP-N-acetyl-alpha-D-muramate + NADP(+) = UDP-N-acetyl-3-O-(1-carboxyvinyl)-alpha-D-glucosamine + NADPH + H(+). Its pathway is cell wall biogenesis; peptidoglycan biosynthesis. Functionally, cell wall formation. The chain is UDP-N-acetylenolpyruvoylglucosamine reductase from Deinococcus radiodurans (strain ATCC 13939 / DSM 20539 / JCM 16871 / CCUG 27074 / LMG 4051 / NBRC 15346 / NCIMB 9279 / VKM B-1422 / R1).